The sequence spans 888 residues: 3-hydroxy-3-methylglutaryl-coenzyme A reductase (888 aa).

Over 1-9 (MLSRLFRMH) the chain is Cytoplasmic. Residues 10–39 (GLFVASHPWEVIVGTVTLTICMMSMNMFTG) form a helical membrane-spanning segment. Residues 40 to 56 (NDKICGWNYECPKFEED) lie on the Lumenal side of the membrane. The helical transmembrane segment at 57–78 (VLSSDIIILTITRCIAILYIYF) threads the bilayer. The region spanning 61–218 (DIIILTITRC…MTFFPACVSL (158 aa)) is the SSD domain. Residues 75-78 (YIYF) carry the INSIG-binding motif motif. Residues 79–89 (QFQNLRQLGSK) lie on the Cytoplasmic side of the membrane. Lysine 89 is covalently cross-linked (Glycyl lysine isopeptide (Lys-Gly) (interchain with G-Cter in ubiquitin)). Residues 90-114 (YILGIAGLFTIFSSFVFSTVVIHFL) form a helical membrane-spanning segment. Topologically, residues 115-123 (DKELTGLNE) are lumenal. A helical membrane pass occupies residues 124–149 (ALPFFLLLIDLSRASALAKFALSSNS). At 150–159 (QDEVRENIAR) the chain is on the cytoplasmic side. Residues 160–187 (GMAILGPTFTLDALVECLVIGVGTMSGV) traverse the membrane as a helical segment. The Lumenal segment spans residues 188–191 (RQLE). A helical membrane pass occupies residues 192–220 (IMCCFGCMSVLANYFVFMTFFPACVSLVL). Residues 221–248 (ELSRESREGRPIWQLSHFARVLEEEENK) are Cytoplasmic-facing. A Glycyl lysine isopeptide (Lys-Gly) (interchain with G-Cter in ubiquitin) cross-link involves residue lysine 248. The chain crosses the membrane as a helical span at residues 249-275 (PNPVTQRVKMIMSLGLVLVHAHSRWIA). At 276 to 314 (DPSPQNSTADNSKVSLGLDENVSKRIEPSVSLWQFYLSK) the chain is on the lumenal side. Residues asparagine 281 and asparagine 296 are each glycosylated (N-linked (GlcNAc...) asparagine). Residues 315-339 (MISMDIEQVITLSLALLLAVKYIFF) traverse the membrane as a helical segment. Topologically, residues 340–888 (EQAETESTLS…LEGACTKKAA (549 aa)) are cytoplasmic. Residues glutamate 559, lysine 691, and aspartate 767 each act as charge relay system in the active site. Histidine 866 acts as the Proton donor in catalysis. A Phosphoserine; by AMPK modification is found at serine 872.

Belongs to the HMG-CoA reductase family. Homotetramer. Homodimer. Interacts (via its SSD) with INSIG1; the interaction, accelerated by sterols, leads to the recruitment of HMGCR to AMFR/gp78 for its ubiquitination by the sterol-mediated ERAD pathway. Interacts with UBIAD1. Undergoes sterol-mediated ubiquitination and ER-associated degradation (ERAD). Accumulation of sterols in the endoplasmic reticulum (ER) membrane, triggers binding of the reductase to the ER membrane protein INSIG1 or INSIG2. The INSIG1 binding leads to the recruitment of the ubiquitin ligase, AMFR/gp78, RNF139 or RNF145, initiating ubiquitination of the reductase. The ubiquitinated reductase is then extracted from the ER membrane and delivered to cytosolic 26S proteosomes by a mechanism probably mediated by the ATPase Valosin-containing protein VCP/p97. The INSIG2-binding leads to the recruitment of the ubiquitin ligase RNF139, initiating ubiquitination of the reductase. Lys-248 is the main site of ubiquitination. Ubiquitination is enhanced by the presence of a geranylgeranylated protein. In terms of processing, N-glycosylated. Deglycosylated by NGLY1 on release from the endoplasmic reticulum (ER) in a sterol-mediated manner. Post-translationally, phosphorylated. Phosphorylation at Ser-872 reduces the catalytic activity.

It localises to the endoplasmic reticulum membrane. The protein localises to the peroxisome membrane. It carries out the reaction (R)-mevalonate + 2 NADP(+) + CoA = (3S)-3-hydroxy-3-methylglutaryl-CoA + 2 NADPH + 2 H(+). It participates in metabolic intermediate biosynthesis; (R)-mevalonate biosynthesis; (R)-mevalonate from acetyl-CoA: step 3/3. Regulated by a negative feedback mechanism through sterols and non-sterol metabolites derived from mevalonate. Phosphorylation at Ser-872 down-regulates the catalytic activity. Functionally, catalyzes the conversion of (3S)-hydroxy-3-methylglutaryl-CoA (HMG-CoA) to mevalonic acid, the rate-limiting step in the synthesis of cholesterol and other isoprenoids, thus plays a critical role in cellular cholesterol homeostasis. The polypeptide is 3-hydroxy-3-methylglutaryl-coenzyme A reductase (HMGCR) (Oryctolagus cuniculus (Rabbit)).